A 687-amino-acid polypeptide reads, in one-letter code: Fatty acid oxidation complex subunit alpha (687 aa).

Residues 1–191 (MKNTSAFAWT…KLGVVDASVP (191 aa)) are enoyl-CoA hydratase. The interval 307–687 (KSIDYVGVLG…ADKYGDRFIE (381 aa)) is 3-hydroxyacyl-CoA dehydrogenase.

It in the N-terminal section; belongs to the enoyl-CoA hydratase/isomerase family. In the central section; belongs to the 3-hydroxyacyl-CoA dehydrogenase family. As to quaternary structure, heterotetramer of two alpha chains (FadJ) and two beta chains (FadI).

The protein resides in the cytoplasm. The catalysed reaction is a (3S)-3-hydroxyacyl-CoA = a (2E)-enoyl-CoA + H2O. The enzyme catalyses a 4-saturated-(3S)-3-hydroxyacyl-CoA = a (3E)-enoyl-CoA + H2O. It carries out the reaction a (3S)-3-hydroxyacyl-CoA + NAD(+) = a 3-oxoacyl-CoA + NADH + H(+). It catalyses the reaction (3S)-3-hydroxybutanoyl-CoA = (3R)-3-hydroxybutanoyl-CoA. It functions in the pathway lipid metabolism; fatty acid beta-oxidation. Catalyzes the formation of a hydroxyacyl-CoA by addition of water on enoyl-CoA. Also exhibits 3-hydroxyacyl-CoA epimerase and 3-hydroxyacyl-CoA dehydrogenase activities. The sequence is that of Fatty acid oxidation complex subunit alpha from Aliivibrio fischeri (strain ATCC 700601 / ES114) (Vibrio fischeri).